The sequence spans 1100 residues: Formin-like protein 1 (1100 aa).

Residues 1–13 (MGNAAGSAEQPAG) show a composition bias toward low complexity. Disordered regions lie at residues 1–31 (MGNA…PMPA), 167–200 (STDN…PKSR), 446–474 (RFSE…TRPS), and 510–635 (TPSG…AKKP). Gly-2 carries the N-myristoyl glycine lipid modification. A Phosphoserine modification is found at Ser-7. The segment covering 14–28 (PAAPPPKQPAPPKQP) has biased composition (pro residues). One can recognise a GBD/FH3 domain in the interval 27 to 468 (QPMPAAGELE…PPEPEKAPPA (442 aa)). At Ser-184 the chain carries Phosphoserine. The span at 517-538 (PTPGVPTGSPSPDLAPAAEPAP) shows a compositional bias: low complexity. Pro residues predominate over residues 539 to 615 (GAAPPPPPPL…PPPPPPPGGP (77 aa)). A phosphoserine mark is found at Ser-624 and Ser-693. The 392-residue stretch at 632-1023 (AKKPIQTKFR…QEAGADTPGK (392 aa)) folds into the FH2 domain. The tract at residues 1008-1037 (KKEAAAQEAGADTPGKGEPPAPKSPPKARR) is disordered. The span at 1013-1023 (AQEAGADTPGK) shows a compositional bias: low complexity. Ser-1031 carries the phosphoserine modification. The region spanning 1059-1090 (SDRDGAIEDIITVIKTVPFTARTGKRTSRLLC) is the DAD domain.

This sequence belongs to the formin homology family. Interacts with RAC1, PFN1 and PFN2. Interacts (activated by RAC1) with SRGAP2 (via SH3 domain); regulates the actin filament severing activity of FMNL1. In terms of processing, myristoylation mediates membrane localization and blebbing. In terms of tissue distribution, expressed in heart, brain, placenta, lung, liver, skeletal muscle, kidney and pancreas.

Its subcellular location is the cytoplasm. It is found in the cell membrane. It localises to the cytoplasmic vesicle. The protein localises to the phagosome. The protein resides in the cell cortex. Its subcellular location is the cell projection. It is found in the bleb. Its function is as follows. May play a role in the control of cell motility and survival of macrophages. Plays a role in the regulation of cell morphology and cytoskeletal organization. Required in the cortical actin filament dynamics and cell shape. In Homo sapiens (Human), this protein is Formin-like protein 1 (FMNL1).